A 632-amino-acid chain; its full sequence is DNA mismatch repair protein MutL (632 aa).

It belongs to the DNA mismatch repair MutL/HexB family.

Functionally, this protein is involved in the repair of mismatches in DNA. It is required for dam-dependent methyl-directed DNA mismatch repair. May act as a 'molecular matchmaker', a protein that promotes the formation of a stable complex between two or more DNA-binding proteins in an ATP-dependent manner without itself being part of a final effector complex. The protein is DNA mismatch repair protein MutL of Pseudomonas putida (strain GB-1).